A 684-amino-acid chain; its full sequence is MELKATTLGKRLAQHPYDRAVILNAGIKVSGDRHEYLIPFNQLLAIHCKRGLVWGELEFVLPDEKVVRLHGTEWGETQRFYHHLDAHWRRWSGEMSEIASGVLRQQLDLIATRTGENKWLTREQTSGVQQQIRQALSALPLPVNRLEEFDNCREAWRKCQAWLKDIESARLQHNQAYTEAMLTEYADFFRQVESSPLNPAQARAVVNGEHSLLVLAGAGSGKTSVLVARAGWLLARGEASPEQILLLAFGRKAAEEMDERIRERLHTEDITARTFHALALHIIQQGSKKVPIVSKLENDTAARHELFIAEWRKQCSEKKAQAKGWRQWLTEEMQWSVPEGNFWDDEKLQRRLASRLDRWVSLMRMHGGAQAEMIASAPEEIRDLFSKRIKLMAPLLKAWKGALKAENAVDFSGLIHQAIVILEKGRFISPWKHILVDEFQDISPQRAALLAALRKQNSQTTLFAVGDDWQAIYRFSGAQMSLTTAFHENFGEGERCDLDTTYRFNSRIGEVANRFIQQNPGQLKKPLNSLTNGDKKAVTLLDESQLDALLDKLSGYAKPEERILILARYHHMRPASLEKAATRWPKLQIDFMTIHASKGQQADYVIIVGLQEGSDGFPAAARESIMEEALLPPVEDFPDAEERRLMYVALTRARHRVWALFNKENPSPFVEILKNLDVPVARKP.

The UvrD-like helicase ATP-binding domain maps to 195-505 (SPLNPAQARA…CDLDTTYRFN (311 aa)). Residues 216–223 (AGAGSGKT) and R503 each bind ATP.

It belongs to the helicase family. UvrD subfamily.

The enzyme catalyses Couples ATP hydrolysis with the unwinding of duplex DNA by translocating in the 3'-5' direction.. It catalyses the reaction ATP + H2O = ADP + phosphate + H(+). In terms of biological role, helicase IV catalyzes the unwinding of duplex DNA in the 3' to 5' direction with respect to the bound single strand in a reaction that is dependent upon the hydrolysis of ATP. The sequence is that of DNA helicase IV (helD) from Escherichia coli (strain K12).